Consider the following 89-residue polypeptide: Venom peptide BmKAPI (89 aa).

The signal sequence occupies residues 1 to 22 (MKFVFASFALFVIFLCFSQSLS). 5 disulfides stabilise this stretch: C28-C66, C37-C62, C41-C55, C46-C86, and C68-C80. The TIL domain occupies 28 to 86 (CRDNEVFDNCISNCGPPRCSNILNTYPCTNLGPLCTPGCKCKDGRVYDNQGRCVLQTEC).

This sequence belongs to the serine protease inhibitor-like (TIL domain-containing) family. In terms of tissue distribution, expressed by the venom gland.

The protein resides in the secreted. In terms of biological role, serine protease inhibitor. This Olivierus martensii (Manchurian scorpion) protein is Venom peptide BmKAPI.